Here is a 1706-residue protein sequence, read N- to C-terminus: DDT domain-containing protein PTM (1706 aa).

A compositionally biased stretch (basic residues) spans methionine 1–glutamine 16. Disordered stretches follow at residues methionine 1 to asparagine 27 and valine 144 to aspartate 168. A Nuclear localization signal motif is present at residues arginine 9–leucine 18. The segment covering glutamate 148–glutamate 160 has biased composition (acidic residues). Residues glutamate 192–arginine 252 enclose the DDT domain. Over residues tyrosine 375–serine 393 the composition is skewed to basic and acidic residues. A disordered region spans residues tyrosine 375–aspartate 408. Polar residues predominate over residues arginine 394 to aspartate 408. Residues serine 411–asparagine 458 form a PHD-type 1 zinc finger. 2 disordered regions span residues lysine 1165–lysine 1194 and threonine 1311–proline 1345. Composition is skewed to polar residues over residues proline 1167 to lysine 1194 and threonine 1311 to aspartate 1323. Positions aspartate 1325–lysine 1336 are enriched in basic and acidic residues. 5 helical membrane-spanning segments follow: residues alanine 1539–proline 1559, leucine 1569–leucine 1589, alanine 1596–isoleucine 1616, alanine 1624–leucine 1644, and methionine 1682–isoleucine 1702.

In terms of assembly, interacts (via the DDT domain) with CHR11 (via C-terminus).

The protein resides in the plastid. It localises to the chloroplast outer membrane. The protein localises to the nucleus. Membrane-bound transcription factor required for the plastid-to-nucleus retrograde signaling. Functions in multiple retrograde pathways. The plastid-to-nucleus signal plays an important role in the coordinated expression of both nuclear- and chloroplast-localized genes that encode photosynthesis-related proteins. In the nucleus, activates ABI4 transcription in a PHD-dependent manner associated with histone modifications. Localized primarily in the chloroplast outer membrane as dormant form and, in response to retrograde signals, is released from the membrane through proteolytic cleavage and its cleaved fragment containing the transcription factor domain is redistributed to the nucleus, where it regulates the expression of particular nuclear genes. The sequence is that of DDT domain-containing protein PTM from Arabidopsis thaliana (Mouse-ear cress).